We begin with the raw amino-acid sequence, 180 residues long: uncharacterized protein (180 aa).

The HTH dtxR-type domain maps to 17–80 (RRSRILHYLM…LIPNMGVRLT (64 aa)).

Belongs to the DtxR/MntR family.

This is an uncharacterized protein from Aeropyrum pernix (strain ATCC 700893 / DSM 11879 / JCM 9820 / NBRC 100138 / K1).